A 103-amino-acid chain; its full sequence is Large ribosomal subunit protein uL24 (103 aa).

The protein belongs to the universal ribosomal protein uL24 family. As to quaternary structure, part of the 50S ribosomal subunit.

In terms of biological role, one of two assembly initiator proteins, it binds directly to the 5'-end of the 23S rRNA, where it nucleates assembly of the 50S subunit. Its function is as follows. One of the proteins that surrounds the polypeptide exit tunnel on the outside of the subunit. The chain is Large ribosomal subunit protein uL24 from Lacticaseibacillus casei (strain BL23) (Lactobacillus casei).